Here is a 299-residue protein sequence, read N- to C-terminus: GTPase Era (299 aa).

The 168-residue stretch at 4-171 folds into the Era-type G domain; the sequence is KSGFVAILGR…VDILSENLDE (168 aa). Positions 12–19 are G1; that stretch reads GRPNVGKS. 12-19 lines the GTP pocket; the sequence is GRPNVGKS. Residues 38-42 form a G2 region; sequence QTTRN. Positions 59–62 are G3; the sequence is DTPG. GTP contacts are provided by residues 59–63 and 121–124; these read DTPGI and NKID. The tract at residues 121-124 is G4; that stretch reads NKID. A G5 region spans residues 150–152; sequence ISA. One can recognise a KH type-2 domain in the interval 202–280; the sequence is TREEIPHSVA…FLETWVKVKK (79 aa).

Belongs to the TRAFAC class TrmE-Era-EngA-EngB-Septin-like GTPase superfamily. Era GTPase family. In terms of assembly, monomer.

The protein localises to the cytoplasm. Its subcellular location is the cell membrane. Its function is as follows. An essential GTPase that binds both GDP and GTP, with rapid nucleotide exchange. Plays a role in 16S rRNA processing and 30S ribosomal subunit biogenesis and possibly also in cell cycle regulation and energy metabolism. The protein is GTPase Era of Streptococcus pneumoniae (strain Hungary19A-6).